A 239-amino-acid polypeptide reads, in one-letter code: Purine nucleoside phosphorylase DeoD-type (239 aa).

Histidine 5 contributes to the a purine D-ribonucleoside binding site. Residues glycine 21, arginine 25, arginine 44, and 88–91 (RVGS) each bind phosphate. Residues 180–182 (EME) and 204–205 (SD) contribute to the a purine D-ribonucleoside site. Aspartate 205 functions as the Proton donor in the catalytic mechanism.

The protein belongs to the PNP/UDP phosphorylase family. As to quaternary structure, homohexamer; trimer of homodimers.

The catalysed reaction is a purine D-ribonucleoside + phosphate = a purine nucleobase + alpha-D-ribose 1-phosphate. The enzyme catalyses a purine 2'-deoxy-D-ribonucleoside + phosphate = a purine nucleobase + 2-deoxy-alpha-D-ribose 1-phosphate. In terms of biological role, catalyzes the reversible phosphorolytic breakdown of the N-glycosidic bond in the beta-(deoxy)ribonucleoside molecules, with the formation of the corresponding free purine bases and pentose-1-phosphate. The chain is Purine nucleoside phosphorylase DeoD-type from Salmonella heidelberg (strain SL476).